The sequence spans 53 residues: Large ribosomal subunit protein bL32c (53 aa).

The protein belongs to the bacterial ribosomal protein bL32 family.

The protein localises to the plastid. It localises to the chloroplast. The chain is Large ribosomal subunit protein bL32c from Glycine max (Soybean).